The sequence spans 341 residues: Uroporphyrinogen decarboxylase (341 aa).

Substrate is bound by residues 23–27 (RQAGR), Asp-73, Tyr-148, Ser-203, and His-318.

This sequence belongs to the uroporphyrinogen decarboxylase family. In terms of assembly, homodimer.

The protein localises to the cytoplasm. The enzyme catalyses uroporphyrinogen III + 4 H(+) = coproporphyrinogen III + 4 CO2. It functions in the pathway porphyrin-containing compound metabolism; protoporphyrin-IX biosynthesis; coproporphyrinogen-III from 5-aminolevulinate: step 4/4. Its function is as follows. Catalyzes the decarboxylation of four acetate groups of uroporphyrinogen-III to yield coproporphyrinogen-III. The chain is Uroporphyrinogen decarboxylase from Brucella ovis (strain ATCC 25840 / 63/290 / NCTC 10512).